Reading from the N-terminus, the 509-residue chain is DEAD-box ATP-dependent RNA helicase CshA (509 aa).

A Q motif motif is present at residues 2 to 30 (QNFKELGISDKTVQTLEAMGFKEPTPIQK). The Helicase ATP-binding domain maps to 33–203 (IPYALEGDDI…QQFMKAPKII (171 aa)). Position 46 to 53 (46 to 53 (AQTGTGKT)) interacts with ATP. Residues 150–153 (DEAD) carry the DEAD box motif. Residues 214–375 (QIDEYYTIVK…LRPPHRKEVL (162 aa)) form the Helicase C-terminal domain. Basic residues-rich tracts occupy residues 440 to 459 (ARKN…KRGN) and 467 to 482 (RRSK…KKNQ). The tract at residues 440–509 (ARKNRSSKGG…KGRTFADHQK (70 aa)) is disordered. Over residues 483 to 492 (KKFDRRDKQQ) the composition is skewed to basic and acidic residues.

This sequence belongs to the DEAD box helicase family. CshA subfamily. Oligomerizes, may be a member of the RNA degradosome.

It localises to the cytoplasm. It catalyses the reaction ATP + H2O = ADP + phosphate + H(+). Its function is as follows. DEAD-box RNA helicase possibly involved in RNA degradation. Unwinds dsRNA in both 5'- and 3'-directions, has RNA-dependent ATPase activity. The sequence is that of DEAD-box ATP-dependent RNA helicase CshA from Staphylococcus epidermidis (strain ATCC 35984 / DSM 28319 / BCRC 17069 / CCUG 31568 / BM 3577 / RP62A).